Consider the following 549-residue polypeptide: Glucose-6-phosphate isomerase (549 aa).

Residue Glu355 is the Proton donor of the active site. Catalysis depends on residues His386 and Lys514.

This sequence belongs to the GPI family.

It is found in the cytoplasm. It carries out the reaction alpha-D-glucose 6-phosphate = beta-D-fructose 6-phosphate. It functions in the pathway carbohydrate biosynthesis; gluconeogenesis. It participates in carbohydrate degradation; glycolysis; D-glyceraldehyde 3-phosphate and glycerone phosphate from D-glucose: step 2/4. Functionally, catalyzes the reversible isomerization of glucose-6-phosphate to fructose-6-phosphate. The protein is Glucose-6-phosphate isomerase of Salmonella agona (strain SL483).